The primary structure comprises 160 residues: uncharacterized protein (160 aa).

C2H2-type zinc fingers lie at residues 10-32 (LSCL…LPTH), 41-64 (QTCD…KRYH), and 75-98 (FQCQ…KIEH). Y115 is subject to Phosphotyrosine. Position 116 is a phosphoserine (S116).

It localises to the nucleus. In terms of biological role, may be involved in transcriptional regulation. This is an uncharacterized protein from Drosophila melanogaster (Fruit fly).